We begin with the raw amino-acid sequence, 718 residues long: Methionine--tRNA ligase (718 aa).

The short motif at 27-37 (PYANGQIHIGH) is the 'HIGH' region element. Zn(2+) contacts are provided by Cys-158, Cys-161, Cys-171, and Cys-174. A 'KMSKS' region motif is present at residues 348 to 352 (KMSKS). Lys-351 serves as a coordination point for ATP. Residues 612–718 (DFAKIDLRIA…SGAKPGMRVK (107 aa)) enclose the tRNA-binding domain.

This sequence belongs to the class-I aminoacyl-tRNA synthetase family. MetG type 1 subfamily. In terms of assembly, homodimer. Zn(2+) serves as cofactor.

The protein localises to the cytoplasm. It carries out the reaction tRNA(Met) + L-methionine + ATP = L-methionyl-tRNA(Met) + AMP + diphosphate. In terms of biological role, is required not only for elongation of protein synthesis but also for the initiation of all mRNA translation through initiator tRNA(fMet) aminoacylation. In Burkholderia orbicola (strain AU 1054), this protein is Methionine--tRNA ligase.